Reading from the N-terminus, the 393-residue chain is Chalcone synthase (393 aa).

The active site involves Cys-164.

Belongs to the thiolase-like superfamily. Chalcone/stilbene synthases family.

It carries out the reaction (E)-4-coumaroyl-CoA + 3 malonyl-CoA + 3 H(+) = 2',4,4',6'-tetrahydroxychalcone + 3 CO2 + 4 CoA. It functions in the pathway secondary metabolite biosynthesis; flavonoid biosynthesis. In terms of biological role, the primary product of this enzyme is 4,2',4',6'-tetrahydroxychalcone (also termed naringenin-chalcone or chalcone) which can under specific conditions spontaneously isomerize into naringenin. The polypeptide is Chalcone synthase (CHS) (Vitis vinifera (Grape)).